Consider the following 589-residue polypeptide: Probable 9-cis-epoxycarotenoid dioxygenase NCED5, chloroplastic (589 aa).

Residues 1-45 (MACSYILTPNPTKLNLSFAPSDLDAPSPSSSVSFTNTKPRRRKLS) constitute a chloroplast transit peptide. Positions 21–34 (SDLDAPSPSSSVSF) are enriched in low complexity. Residues 21 to 51 (SDLDAPSPSSSVSFTNTKPRRRKLSANSVSD) form a disordered region. Residues His287, His336, His401, and His576 each coordinate Fe cation.

Belongs to the carotenoid oxygenase family. In terms of assembly, interacts in vitro with VAR3. Fe(2+) is required as a cofactor. As to expression, detected only in seeds.

It localises to the plastid. Its subcellular location is the chloroplast thylakoid membrane. The catalysed reaction is a 9-cis-epoxycarotenoid + O2 = a 12'-apo-carotenal + 2-cis,4-trans-xanthoxin. The enzyme catalyses 9-cis-violaxanthin + O2 = (3S,5R,6S)-5,6-epoxy-3-hydroxy-5,6-dihydro-12'-apo-beta-caroten-12'-al + 2-cis,4-trans-xanthoxin. It catalyses the reaction 9'-cis-neoxanthin + O2 = (3S,5R,6R)-3,5-dihydroxy-6,7-didehydro-5,6-dihydro-12'-apo-beta-caroten-12'-al + 2-cis,4-trans-xanthoxin. Has a 11,12(11',12') 9-cis epoxycarotenoid cleavage activity. Catalyzes the first step of abscisic-acid biosynthesis from carotenoids. The sequence is that of Probable 9-cis-epoxycarotenoid dioxygenase NCED5, chloroplastic (NCED5) from Arabidopsis thaliana (Mouse-ear cress).